Here is a 1169-residue protein sequence, read N- to C-terminus: Polyamine-transporting ATPase 13A2 (1169 aa).

Residues 1 to 44 lie on the Cytoplasmic side of the membrane; that stretch reads MSADSSLLMGSTPPSYGTLTTGTSIDPLSSSASSVRLSGYCGSP. An intramembrane segment occupies 45-65; the sequence is WRAIGYHAAVWMLAGIPWLLF. Over 66–225 the chain is Cytoplasmic; it reads RWKPLWGVRL…ISIPVKSYLQ (160 aa). Residues 226–246 traverse the membrane as a helical segment; sequence LLADEALNPYYGFQAFSIALW. Over 247–250 the chain is Lumenal; sequence LADH. The chain crosses the membrane as a helical span at residues 251–271; the sequence is YYWYALCIFLISAISICLALY. The Cytoplasmic portion of the chain corresponds to 272 to 422; sequence KTRKQSLTLR…SFKFYKHSMK (151 aa). Residues 423–443 form a helical membrane-spanning segment; that stretch reads FVAALSVLALLGTVYSIIILY. At 444–458 the chain is on the lumenal side; sequence RNRVPVREIVIRALD. Residues 459–479 form a helical membrane-spanning segment; it reads LVTVVVPPALPAAMTVCTLYA. At 480–919 the chain is on the cytoplasmic side; the sequence is QSRLRTQGIF…REGRCSLDTS (440 aa). Catalysis depends on Asp-508, which acts as the 4-aspartylphosphate intermediate. Positions 867 and 871 each coordinate Mg(2+). A helical membrane pass occupies residues 920 to 940; sequence FSVFKYMALYSLTQFISVLIL. Residues 941-946 are Lumenal-facing; it reads YTINTN. The helical transmembrane segment at 947-967 threads the bilayer; it reads LGDLQFLAIDLVITTTVAVLM. Topologically, residues 968–993 are cytoplasmic; that stretch reads SRTGPALTLVRARPPGALLSVPVLGS. Residues 994–1014 form a helical membrane-spanning segment; it reads LLLQVALVAGIQLGGYFLVIA. Over 1015–1037 the chain is Lumenal; that stretch reads QPWFVPLNRTVPAPDNLPNYENT. A glycan (N-linked (GlcNAc...) asparagine) is linked at Asn-1022. A helical membrane pass occupies residues 1038 to 1058; the sequence is VVFSLSGFQYLILAAAVSKGA. The Cytoplasmic segment spans residues 1059–1069; that stretch reads PFRQPLYTNVP. Residues 1070–1090 traverse the membrane as a helical segment; sequence FLVALALLGSVLVGLILVPGL. Topologically, residues 1091 to 1106 are lumenal; the sequence is LQGPLGLRNIVDSSFK. Residues 1107-1127 form a helical membrane-spanning segment; it reads LLLLGLVAFNFVGAFMLESVL. Residues 1128–1169 lie on the Cytoplasmic side of the membrane; sequence DQCLPACLRWLRPKRASKKQFKRLQQELAEHPWPTLPVGSVR.

Belongs to the cation transport ATPase (P-type) (TC 3.A.3) family. Type V subfamily. Interacts with MYCBP2; the interaction inhibits the ubiquitination of TSC2 by MYCBP2. Interacts with HDAC6; the interaction results in recruitment of HDAC6 to lysosomes to promote CTTN deacetylation. In terms of processing, autophosphorylated. Accumulates in an inactive autophosphorylated state and autophosphorylation is stimulated by phosphatidic acid and phosphatidylinositol 3,5-bisphosphate but not by Mn(2+) or Zn(2+). The presence of spermine results in a dose-dependent reduction in autophosphorylation.

The protein resides in the lysosome membrane. It localises to the late endosome membrane. Its subcellular location is the endosome. It is found in the multivesicular body membrane. The protein localises to the cytoplasmic vesicle. The protein resides in the autophagosome membrane. The catalysed reaction is spermidine(out) + ATP + H2O = spermidine(in) + ADP + phosphate + H(+). The enzyme catalyses spermine(out) + ATP + H2O = spermine(in) + ADP + phosphate + H(+). Accumulates in an inactive autophosphorylated state. The presence of spermine results in a dose-dependent reduction in autophosphorylation. Functionally, ATPase which acts as a lysosomal polyamine exporter with high affinity for spermine. Also stimulates cellular uptake of polyamines and protects against polyamine toxicity. Plays a role in intracellular cation homeostasis and the maintenance of neuronal integrity. Contributes to cellular zinc homeostasis. Confers cellular protection against Mn(2+) and Zn(2+) toxicity and mitochondrial stress. Required for proper lysosomal and mitochondrial maintenance. Regulates the autophagy-lysosome pathway through the control of SYT11 expression at both transcriptional and post-translational levels. Facilitates recruitment of deacetylase HDAC6 to lysosomes to deacetylate CTTN, leading to actin polymerization, promotion of autophagosome-lysosome fusion and completion of autophagy. Promotes secretion of exosomes as well as secretion of SCNA via exosomes. Plays a role in lipid homeostasis. This Mus musculus (Mouse) protein is Polyamine-transporting ATPase 13A2.